The sequence spans 205 residues: Holliday junction branch migration complex subunit RuvA (205 aa).

The segment at 1-65 (MIAKLKGILD…EDRIHLFGFL (65 aa)) is domain I. Positions 66-144 (DNTEKVAFNM…NINTIANNTS (79 aa)) are domain II. Positions 145–153 (LAILSTDSN) are flexible linker. The interval 154-205 (THDNILSDAITALIALGISRAEATQILSDIYALFPSISVNELVRTALQRRAK) is domain III.

Belongs to the RuvA family. In terms of assembly, homotetramer. Forms an RuvA(8)-RuvB(12)-Holliday junction (HJ) complex. HJ DNA is sandwiched between 2 RuvA tetramers; dsDNA enters through RuvA and exits via RuvB. An RuvB hexamer assembles on each DNA strand where it exits the tetramer. Each RuvB hexamer is contacted by two RuvA subunits (via domain III) on 2 adjacent RuvB subunits; this complex drives branch migration. In the full resolvosome a probable DNA-RuvA(4)-RuvB(12)-RuvC(2) complex forms which resolves the HJ.

The protein localises to the cytoplasm. Functionally, the RuvA-RuvB-RuvC complex processes Holliday junction (HJ) DNA during genetic recombination and DNA repair, while the RuvA-RuvB complex plays an important role in the rescue of blocked DNA replication forks via replication fork reversal (RFR). RuvA specifically binds to HJ cruciform DNA, conferring on it an open structure. The RuvB hexamer acts as an ATP-dependent pump, pulling dsDNA into and through the RuvAB complex. HJ branch migration allows RuvC to scan DNA until it finds its consensus sequence, where it cleaves and resolves the cruciform DNA. This chain is Holliday junction branch migration complex subunit RuvA, found in Orientia tsutsugamushi (strain Boryong) (Rickettsia tsutsugamushi).